Here is a 46-residue protein sequence, read N- to C-terminus: Esculentin-1HSa (46 aa).

The cysteines at positions 40 and 46 are disulfide-linked.

As to expression, expressed by the skin glands.

The protein resides in the secreted. Has antibacterial activity against the Gram-positive bacterium S.aureus ATCC 25923 (MIC=12 uM) and the Gram-negative bacterium E.coli ATCC 25726 (MIC=12 uM). This is Esculentin-1HSa from Odorrana hosii (Hose's rock frog).